A 379-amino-acid polypeptide reads, in one-letter code: MEKLILRRVDRQNEEMILNFGPQHPSTHGVINFLVETDGEVLKRATPDVGYLHRSIEKIGEMVGYPGFMPYTDRVDYVAAMFANEGYAIAVERLLKIEVPQRAQWLRAISCELCRIASHLVSVGTMVMDIGAFTPMLHGIRERETINDLLEALCGARLTYNYHRIGGVAFDLPEGWRDKVLHFLDHFDKFLAEFDRLISFNEIYVKRLANVAVIPGPMAINYGLVGPNLRGSGVDWDVRRDLPYGAYPNFKFDVPVGKGFFGTSGDSFDRYYVRCLEMAESSKIVRQALDSLPEGEITAKVPRNIKPEAGEAIGRVESARGELAYYVISDGTNKAYRVRARTGSFTAMCIIEDISRGLMVADLVALISSLDVVAPEIDR.

The protein belongs to the complex I 49 kDa subunit family. NDH-1 is composed of 14 different subunits. Subunits NuoB, C, D, E, F, and G constitute the peripheral sector of the complex.

The protein resides in the cell inner membrane. The catalysed reaction is a quinone + NADH + 5 H(+)(in) = a quinol + NAD(+) + 4 H(+)(out). Its function is as follows. NDH-1 shuttles electrons from NADH, via FMN and iron-sulfur (Fe-S) centers, to quinones in the respiratory chain. The immediate electron acceptor for the enzyme in this species is believed to be ubiquinone. Couples the redox reaction to proton translocation (for every two electrons transferred, four hydrogen ions are translocated across the cytoplasmic membrane), and thus conserves the redox energy in a proton gradient. This is NADH-quinone oxidoreductase subunit D 1 from Anaeromyxobacter sp. (strain K).